A 617-amino-acid chain; its full sequence is Ceramide transfer protein (617 aa).

Residues M1–G11 show a composition bias toward polar residues. The tract at residues M1–P23 is disordered. The 95-residue stretch at P23–S117 folds into the PH domain. The stretch at R268–H302 forms a coiled coil. The FFAT motif lies at E320–E326. Residues Q332–R344 are compositionally biased toward basic and acidic residues. The interval Q332–E355 is disordered. Positions D383–A611 constitute an START domain. E466, Q487, N524, and Y572 together coordinate an N-acylsphing-4-enine.

The protein localises to the cytoplasm. Its subcellular location is the golgi apparatus. The protein resides in the endoplasmic reticulum. It carries out the reaction N-hexadecanoylsphing-4-enine(in) = N-hexadecanoylsphing-4-enine(out). Its function is as follows. May mediate the intracellular trafficking of ceramide in a non-vesicular manner. This Xenopus tropicalis (Western clawed frog) protein is Ceramide transfer protein (cert1).